The chain runs to 214 residues: Small ribosomal subunit protein uS5 (214 aa).

Positions 54–117 (MKYEVIDIGM…RDAKMHVIPV (64 aa)) constitute an S5 DRBM domain.

This sequence belongs to the universal ribosomal protein uS5 family. As to quaternary structure, part of the 30S ribosomal subunit. Contacts protein S4.

With S4 and S12 plays an important role in translational accuracy. The sequence is that of Small ribosomal subunit protein uS5 from Metallosphaera sedula (strain ATCC 51363 / DSM 5348 / JCM 9185 / NBRC 15509 / TH2).